A 310-amino-acid chain; its full sequence is Carbamate kinase 1 (310 aa).

The protein belongs to the carbamate kinase family.

The protein localises to the cytoplasm. It catalyses the reaction hydrogencarbonate + NH4(+) + ATP = carbamoyl phosphate + ADP + H2O + H(+). Its pathway is metabolic intermediate metabolism; carbamoyl phosphate degradation; CO(2) and NH(3) from carbamoyl phosphate: step 1/1. This is Carbamate kinase 1 (arcC1) from Staphylococcus aureus (strain bovine RF122 / ET3-1).